Here is a 293-residue protein sequence, read N- to C-terminus: 4-hydroxybenzoate octaprenyltransferase (293 aa).

8 consecutive transmembrane segments (helical) span residues Pro-26 to Pro-48, Thr-98 to Leu-118, Thr-122 to Phe-142, Leu-145 to Val-165, Glu-167 to Tyr-187, Ile-218 to Gln-238, Trp-241 to Thr-261, and Ala-272 to Tyr-292.

Belongs to the UbiA prenyltransferase family. The cofactor is Mg(2+).

It is found in the cell inner membrane. The enzyme catalyses all-trans-octaprenyl diphosphate + 4-hydroxybenzoate = 4-hydroxy-3-(all-trans-octaprenyl)benzoate + diphosphate. Its pathway is cofactor biosynthesis; ubiquinone biosynthesis. Functionally, catalyzes the prenylation of para-hydroxybenzoate (PHB) with an all-trans polyprenyl group. Mediates the second step in the final reaction sequence of ubiquinone-8 (UQ-8) biosynthesis, which is the condensation of the polyisoprenoid side chain with PHB, generating the first membrane-bound Q intermediate 3-octaprenyl-4-hydroxybenzoate. The chain is 4-hydroxybenzoate octaprenyltransferase from Actinobacillus pleuropneumoniae serotype 3 (strain JL03).